Consider the following 79-residue polypeptide: Small ribosomal subunit protein uS17 (79 aa).

The protein belongs to the universal ribosomal protein uS17 family. As to quaternary structure, part of the 30S ribosomal subunit.

In terms of biological role, one of the primary rRNA binding proteins, it binds specifically to the 5'-end of 16S ribosomal RNA. The chain is Small ribosomal subunit protein uS17 from Bartonella henselae (strain ATCC 49882 / DSM 28221 / CCUG 30454 / Houston 1) (Rochalimaea henselae).